We begin with the raw amino-acid sequence, 472 residues long: Protein hedgehog (472 aa).

Cys84 is lipidated: N-palmitoyl cysteine. Residues Glu149, Asp154, Glu185, Asp188, and Asp190 each contribute to the Ca(2+) site. Gly256 carries Cholesterol glycine ester lipidation.

This sequence belongs to the hedgehog family. As to quaternary structure, interacts with shf. Post-translationally, the C-terminal part of the hedgehog protein precursor displays an autoproteolysis activity that results in the cleavage of the full-length protein into two parts (N-product and C-product). In addition, the C-terminal part displays a cholesterol transferase activity that results by the covalent attachment of a cholesterol moiety to the C-terminal of the newly generated N-product. The N-product is the active species in both local and long-range signaling, whereas the C-product has no signaling activity. In terms of processing, cholesterylation is required for N-product targeting to lipid rafts and multimerization. N-palmitoylation by Rasp of the hedgehog N-product, within the secretory pathway, is required for the embryonic and larval patterning activities of the hedgehog signal.

It is found in the nucleus. The protein localises to the cytoplasm. The protein resides in the cell membrane. The catalysed reaction is glycyl-L-cysteinyl-[protein] + cholesterol + H(+) = [protein]-C-terminal glycyl cholesterol ester + N-terminal L-cysteinyl-[protein]. Functionally, the C-terminal part of the hedgehog protein precursor displays an autoproteolysis activity that results in the cleavage of the full-length protein into two parts (N-product and C-product). In addition, the C-terminal part displays a cholesterol transferase activity that results by the covalent attachment of a cholesterol moiety to the C-terminal of the newly generated N-product. Once cleaved, the C-product has no signaling activity and diffuses from the cell. Its function is as follows. The dually lipidated hedgehog protein N-product is a morphogen which is essential for a variety of patterning events during development. Establishes the anterior-posterior axis of the embryonic segments and patterns the larval imaginal disks. Binds to the patched (ptc) receptor, which functions in association with smoothened (smo), to activate the transcription of target genes wingless (wg), decapentaplegic (dpp) and ptc. In the absence of hh, ptc represses the constitutive signaling activity of smo through fused (fu). Essential component of a signaling pathway which regulates the Duox-dependent gut immune response to bacterial uracil; required to activate Cad99C-dependent endosome formation, norpA-dependent Ca2+ mobilization and p38 MAPK, which are essential steps in the Duox-dependent production of reactive oxygen species (ROS) in response to intestinal bacterial infection. During photoreceptor differentiation, it up-regulates transcription of Ubr3, which in turn promotes the hh-signaling pathway by mediating the ubiquitination and degradation of cos. In Drosophila ananassae (Fruit fly), this protein is Protein hedgehog.